Consider the following 499-residue polypeptide: Kynurenine 3-monooxygenase 3 (499 aa).

This sequence belongs to the aromatic-ring hydroxylase family. KMO subfamily. FAD is required as a cofactor.

The protein resides in the mitochondrion outer membrane. It carries out the reaction L-kynurenine + NADPH + O2 + H(+) = 3-hydroxy-L-kynurenine + NADP(+) + H2O. It participates in cofactor biosynthesis; NAD(+) biosynthesis; quinolinate from L-kynurenine: step 1/3. Functionally, catalyzes the hydroxylation of L-kynurenine (L-Kyn) to form 3-hydroxy-L-kynurenine (L-3OHKyn). Required for synthesis of quinolinic acid. The chain is Kynurenine 3-monooxygenase 3 (bna4-3) from Aspergillus niger (strain ATCC MYA-4892 / CBS 513.88 / FGSC A1513).